Consider the following 264-residue polypeptide: Probable DNA polymerase sliding clamp 2 (264 aa).

The DNA-binding element occupies 75–94; it reads SIAQEATVGIKISNFVRILD.

This sequence belongs to the PCNA family.

Its function is as follows. Sliding clamp subunit. Responsible for tethering the catalytic subunit of DNA polymerase to DNA during high-speed replication. The protein is Probable DNA polymerase sliding clamp 2 of Paramecium bursaria Chlorella virus 1 (PBCV-1).